Reading from the N-terminus, the 326-residue chain is Nucleotide sugar transporter SLC35D2 (326 aa).

Residues 1 to 15 (MEEPNAAPLPSRLAR) are Extracellular-facing. The chain crosses the membrane as a helical span at residues 16 to 36 (LLSALFYGTCSFLIVLVNKAL). The Cytoplasmic segment spans residues 37–41 (LTTYG). The helical transmembrane segment at 42–62 (FPSPIVLGIGQMATTIMILYV) threads the bilayer. Residues 63–130 (FKLNKIIHFP…LLEAIILGTQ (68 aa)) are Extracellular-facing. The helical transmembrane segment at 131 to 151 (YSLNIILSVLAIVLGAFIAAG) threads the bilayer. Residues 152–155 (SDLT) are Cytoplasmic-facing. The chain crosses the membrane as a helical span at residues 156–176 (FNLEGYVFVFLNDIFTAANGV). The Extracellular portion of the chain corresponds to 177 to 189 (YTKQKMDPKELGK). Residues 190 to 210 (YGVLFYNACFMLIPTVIISVS) traverse the membrane as a helical segment. The Cytoplasmic segment spans residues 211-225 (TGDFQQATEFRHWKN). Residues 226–246 (VLFIIQFLLSCLLGFLLMYST) form a helical membrane-spanning segment. At 247 to 253 (ALCSYYN) the chain is on the extracellular side. A helical membrane pass occupies residues 254–276 (SALTTAVVGAIKNVSVAYIGMLV). Over 277–280 (GGDY) the chain is Cytoplasmic. The helical transmembrane segment at 281-303 (IFSLLNFIGLNICMAGGLRYSFL) threads the bilayer. The Extracellular portion of the chain corresponds to 304–326 (TLSSQLKPKQPVDEESIPLDLKS).

This sequence belongs to the TPT transporter family. SLC35D subfamily.

Its subcellular location is the golgi apparatus membrane. The catalysed reaction is UMP(out) + UDP-N-acetyl-alpha-D-glucosamine(in) = UMP(in) + UDP-N-acetyl-alpha-D-glucosamine(out). It catalyses the reaction UMP(out) + UDP-alpha-D-glucose(in) = UMP(in) + UDP-alpha-D-glucose(out). In terms of biological role, nucleotide sugar antiporter transporting UDP-N-acetylglucosamine (UDP-GlcNAc) and UDP-glucose (UDP-Glc) from the cytosol into the lumen of the Golgi in exchange of UMP. By supplying UDP-N-acetylglucosamine, a donor substrate to heparan sulfate synthases, probably takes part in the synthesis of these glycoconjugates. This is Nucleotide sugar transporter SLC35D2 from Mus musculus (Mouse).